Reading from the N-terminus, the 281-residue chain is Large ribosomal subunit protein uL2 (281 aa).

Positions 224-281 (RGSAMNPNDHPHGGGEGHQPIGRKSPMTPWGKKALGVKTRKTKKASNQFIIRRRKESK) are disordered.

The protein belongs to the universal ribosomal protein uL2 family. As to quaternary structure, part of the 50S ribosomal subunit. Forms a bridge to the 30S subunit in the 70S ribosome.

One of the primary rRNA binding proteins. Required for association of the 30S and 50S subunits to form the 70S ribosome, for tRNA binding and peptide bond formation. It has been suggested to have peptidyltransferase activity; this is somewhat controversial. Makes several contacts with the 16S rRNA in the 70S ribosome. The chain is Large ribosomal subunit protein uL2 from Metamycoplasma arthritidis (strain 158L3-1) (Mycoplasma arthritidis).